Reading from the N-terminus, the 428-residue chain is MKTFIALLALLTVVSAEVHQFNIGYRPNMRQRMNAKGKLAEYEKERNELLSKKSLQLASSSSPVIDYEDMAYMVQISLGSPAQNFVLFIDSGSSNLWVPDITCAGGKDATCGSYCKSTPYDACLTFCQEECCTKTVEGVKVLSTTDACQSKHRFNSSLSSSYVTNGQKFDMTYNTGEVKGFFGVDTFCFTNTSVCATGQVFGQATTIGEAFAKQPEDGIIGLGWPALAVNQQTPPLFNLMNQGKLDQPYFVVYLANIGPTSQINGGAFTVGGLDTTHCSSNVDWVPLSTQTFWQFKLGGVSSGSYSQAPNSGWQAAADTAASFIGAPKSVVTSLAKAVGATYVPLTGAFFMDCDAVVPDIVFTINGKTYNMPSTSFVVSAGPGPCMFAFYELTAGGFYPAWMLGPPFMRAYCHVHDMKSGRLGLAKVL.

A signal peptide spans 1–16 (MKTFIALLALLTVVSA). The Peptidase A1 domain maps to 72-425 (YMVQISLGSP…DMKSGRLGLA (354 aa)). The active site involves D90. N-linked (GlcNAc...) asparagine glycans are attached at residues N155 and N191. Residue D318 is part of the active site. The cysteines at positions 353 and 385 are disulfide-linked.

The protein belongs to the peptidase A1 family. Proteolytically cleaved. As to expression, synthesized in the intestine. When secreted in low heme conditions, localizes to neurons near the anterior and posterior regions of the body and in coelomocytes.

It is found in the secreted. Its function is as follows. Aspartic protease which plays a role in heme homeostasis and mediates inter-organ signaling between the intestine and extra-intestinal tissues when cellular heme levels are low. The protein is Aspartic protease 10 of Caenorhabditis elegans.